Here is a 539-residue protein sequence, read N- to C-terminus: MKHTVEMVVLSVGAFLALVGAGLAQDRLFGAHMWVLFFALLAGTLVLMRRVDFRPAVAGHPGRRREYFDEVVKYGVVATVFWGVVGFLVGVVVALQLAFPELNVEPWFNFGRVRPLHTSAVIFAFGGNALIATSFYVVQRTSRARLFGGDLGWFVFWGYQLFIVLAASGYLLGITQSREYAEPEWYVDLWLTIVWVAYLVAFLGTIMKRKEPHIYVANWFYLAFIVTIAMLHVVNNLAVPVSFLGSKSYSAFSGVQDALTQWWYGHNAVGFFLTAGFLAMMYYFIPKQVNRPVYSYRLSIIHFWAIIFMYIWAGPHHLHYTALPDWAQTLGMVFSIMLWMPSWGGMINGLMTLSGAWDKIRTDPVVRMMVMAVAFYGMATFEGPMMSIKTVNSLSHYTDWTIGHVHSGALGWNGLITFGAIYYLVPKLWNRERLYSVRMVNWHFWLATLGIVVYAAVMWVAGIQQGLMWREYDDQGFLVYSFAETVAAMFPYYVMRAAGGALFLAGALLMAFNVTMTILGRVRDEEPIFGAAPLPAPAE.

Transmembrane regions (helical) follow at residues 4–24 (TVEM…AGLA), 28–48 (LFGA…LVLM), and 75–95 (GVVA…VVAL). His-117 provides a ligand contact to heme b. 8 helical membrane-spanning segments follow: residues 118-138 (TSAV…FYVV), 154-174 (FVFW…LLGI), 187-207 (VDLW…GTIM), 214-234 (IYVA…LHVV), 265-285 (GHNA…YYFI), 298-318 (LSII…PHHL), 330-350 (LGMV…INGL), and 368-388 (MMVM…MMSI). Residues His-266, His-316, and His-317 each coordinate Cu cation. His-404 and His-406 together coordinate heme b. A run of 4 helical transmembrane segments spans residues 405–425 (VHSG…YYLV), 443–463 (HFWL…VAGI), 475–495 (QGFL…YYVM), and 499–519 (GGAL…MTIL).

Belongs to the heme-copper respiratory oxidase family. The cofactor is Cu(2+). Heme b is required as a cofactor.

It localises to the cell membrane. It catalyses the reaction 4 Fe(II)-[cytochrome c] + O2 + 8 H(+)(in) = 4 Fe(III)-[cytochrome c] + 2 H2O + 4 H(+)(out). The protein operates within energy metabolism; oxidative phosphorylation. Functionally, cytochrome c oxidase is the component of the respiratory chain that catalyzes the reduction of oxygen to water. Subunits 1-3 form the functional core of the enzyme complex. Co I is the catalytic subunit of the enzyme. Electrons originating in cytochrome c or a quinol are transferred to the bimetallic center formed by a high-spin heme and copper B. This is Cytochrome c oxidase subunit 1 homolog, bacteroid (fixN) from Rhizobium meliloti (strain 1021) (Ensifer meliloti).